Here is a 631-residue protein sequence, read N- to C-terminus: MLYHETFDVIVVGGGHAGTEAALAAARTGQRTLLLTHNIDTLGQMSCNPAIGGIGKGHLVKEVDAMGGLMAQAIDHAGIQFRTLNASKGPAVRATRAQADRALYKAYVRNVLENTPNLTLFQQAVDDVIVEHDHIRGVVTQMGLKFHAKAVVLTVGTFLGGKIHIGLENYAGGRAGDPPSIALAHRLRELPFRVDRLKTGTPPRIDANSVDFSVLEAQHGDNPTPVFSFMGKREHHPRQIPCYITHTNERTHDVIRANLDRSPMYAGIIEGIGPRYCPSIEDKVMRFADKDSHQIFIEPEGLTTTELYPNGISTSLPFDVQVQIVRSMKGFENAHIVRPGYAIEYDFFDPRDLKQTYETKYIHGLFFAGQINGTTGYEEAAAQGLMAGLNASLYSQDKEGWSPRRDQAYMGVLIDDLSTMGTKEPYRMFTSRAEYRLLLREDNADLRLTEKARELGLVDDARWARFNQKIDNMAKERQRLQETWMNPNSVGVEQLNTLLKTPMSREASGEDLLRRPEMTYELLTTLPAFAPALEDAEAAEQVEIQVKYDGYIQRQQDEIEKSLRHEHTKLPAELDYKQVKGLSNEVVLKLNAAKPETIGIASRISGITPAAISILLVHLKKHGMLKKGEAA.

FAD-binding positions include 13–18, Val-125, and Ser-180; that span reads GGGHAG. 273 to 287 lines the NAD(+) pocket; the sequence is GPRYCPSIEDKVMRF. Gln-370 is an FAD binding site.

It belongs to the MnmG family. As to quaternary structure, homodimer. Heterotetramer of two MnmE and two MnmG subunits. Requires FAD as cofactor.

It is found in the cytoplasm. NAD-binding protein involved in the addition of a carboxymethylaminomethyl (cmnm) group at the wobble position (U34) of certain tRNAs, forming tRNA-cmnm(5)s(2)U34. This Vibrio cholerae serotype O1 (strain ATCC 39541 / Classical Ogawa 395 / O395) protein is tRNA uridine 5-carboxymethylaminomethyl modification enzyme MnmG.